Reading from the N-terminus, the 190-residue chain is Dynactin subunit 6 (190 aa).

Thr-186 is modified (phosphothreonine; by CDK1).

This sequence belongs to the dynactin subunits 5/6 family. Dynactin subunit 6 subfamily. In terms of assembly, subunit of dynactin, a multiprotein complex part of a tripartite complex with dynein and a adapter, such as BICDL1, BICD2 or HOOK3. The dynactin complex is built around ACTR1A/ACTB filament and consists of an actin-related filament composed of a shoulder domain, a pointed end and a barbed end. Its length is defined by its flexible shoulder domain. The soulder is composed of 2 DCTN1 subunits, 4 DCTN2 and 2 DCTN3. The 4 DCNT2 (via N-terminus) bind the ACTR1A filament and act as molecular rulers to determine the length. The pointed end is important for binding dynein-dynactin cargo adapters. Consists of 4 subunits: ACTR10, DCNT4, DCTN5 and DCTN6. Within the complex DCTN6 forms a heterodimer with DCTN5. The barbed end is composed of a CAPZA1:CAPZB heterodimers, which binds ACTR1A/ACTB filament and dynactin and stabilizes dynactin. Interacts with PLK1. Interacts with N4BP2L1. In terms of processing, phosphorylation at Thr-186 by CDK1 during mitotic prometaphase creates a binding site for PLK1 that facilitates its recruitment to kinetochores.

The protein resides in the cytoplasm. It is found in the cytoskeleton. It localises to the chromosome. The protein localises to the centromere. Its subcellular location is the kinetochore. In terms of biological role, part of the dynactin complex that activates the molecular motor dynein for ultra-processive transport along microtubules. This chain is Dynactin subunit 6 (DCTN6), found in Pongo abelii (Sumatran orangutan).